Reading from the N-terminus, the 412-residue chain is Putative competence-damage inducible protein (412 aa).

It belongs to the CinA family.

This chain is Putative competence-damage inducible protein, found in Bacillus cereus (strain G9842).